The primary structure comprises 167 residues: Endothelin-3 (167 aa).

The N-terminal stretch at 1-19 (MELGLWLLLGLTVTSAAAA) is a signal peptide. A propeptide spanning residues 20–50 (LPAQPGNAGQERGPGRSGDQEEKRVPAHHRP) is cleaved from the precursor. Residues 22–45 (AQPGNAGQERGPGRSGDQEEKRVP) form a disordered region. 2 disulfide bridges follow: cysteine 53/cysteine 67 and cysteine 55/cysteine 63. A propeptide spanning residues 74-167 (INTPEQTVPY…KSRTDKVHQP (94 aa)) is cleaved from the precursor. The segment at 85–112 (LSNHRGSLRGKRSSGPVPESSQSSPQTR) is disordered. Positions 97 to 109 (SSGPVPESSQSSP) are enriched in low complexity. An endothelin-like region spans residues 115–135 (CACSGVDDKACAYFCAHVTSY). Over residues 140–149 (EKAAAEEKQE) the composition is skewed to basic and acidic residues. Residues 140 to 167 (EKAAAEEKQETGGPRQRLKSRTDKVHQP) are disordered.

The protein belongs to the endothelin/sarafotoxin family.

It is found in the secreted. Functionally, endothelins are endothelium-derived vasoconstrictor peptides. The sequence is that of Endothelin-3 (Edn3) from Rattus norvegicus (Rat).